The sequence spans 157 residues: Beta-defensin 125 (157 aa).

The signal sequence occupies residues 1–20 (MNLLMLTFIICGLLTQVTKG). 3 cysteine pairs are disulfide-bonded: Cys27/Cys55, Cys35/Cys49, and Cys39/Cys56. The segment at 109 to 157 (GETITPETNTPETTMPPSETTSSKTTMPPSETATSETMPPPSQTALTHN) is disordered. Positions 110-140 (ETITPETNTPETTMPPSETTSSKTTMPPSET) are enriched in low complexity. Residues 141–157 (ATSETMPPPSQTALTHN) show a composition bias toward polar residues.

The protein belongs to the beta-defensin family.

The protein resides in the secreted. Has antibacterial activity. In Pongo pygmaeus (Bornean orangutan), this protein is Beta-defensin 125 (DEFB125).